The chain runs to 462 residues: NADH-quinone oxidoreductase subunit N 1 (462 aa).

A run of 15 helical transmembrane segments spans residues 4-24, 32-52, 60-80, 88-108, 113-133, 148-168, 178-198, 220-240, 251-271, 279-299, 307-327, 351-371, 374-394, 416-436, and 439-459; these read FVVAYFPHLCLAFGGLLVLCL, AGFYPATAALFAALPGLWAVA, IACFYAGLLSVIALATIALLA, FAGDALYGLLLWSALGMLLLA, WIMLAVGLELASLCLYALIAA, FLPGAMALAVLLFGMALIYAA, LAAPGPLTAAGLALVLVGVGF, VAAFLSSGSKAAAAAALLHVC, LWPALAVGAGLTMAVGNLGAV, LLAYSSIAQMGYILMAAMAVN, LFYLAAFALMDLAAFGAVGAL, AGVLAIGLASLAGLPPTAGFV, FLVFGAALSAGYVGLAAFGII, LIAHPAAVYAAGPAGTLALGV, and AGLVGLGLFPQTLLGAIAALF.

It belongs to the complex I subunit 2 family. In terms of assembly, NDH-1 is composed of 14 different subunits. Subunits NuoA, H, J, K, L, M, N constitute the membrane sector of the complex.

The protein resides in the cell inner membrane. It catalyses the reaction a quinone + NADH + 5 H(+)(in) = a quinol + NAD(+) + 4 H(+)(out). Its function is as follows. NDH-1 shuttles electrons from NADH, via FMN and iron-sulfur (Fe-S) centers, to quinones in the respiratory chain. The immediate electron acceptor for the enzyme in this species is believed to be ubiquinone. Couples the redox reaction to proton translocation (for every two electrons transferred, four hydrogen ions are translocated across the cytoplasmic membrane), and thus conserves the redox energy in a proton gradient. The chain is NADH-quinone oxidoreductase subunit N 1 from Solidesulfovibrio magneticus (strain ATCC 700980 / DSM 13731 / RS-1) (Desulfovibrio magneticus).